Consider the following 195-residue polypeptide: Ribonuclease HII (195 aa).

Residues 6–195 (SLIAGVDEVG…KSFISRLEIN (190 aa)) form the RNase H type-2 domain. Residues Asp12, Glu13, and Asp108 each contribute to the a divalent metal cation site.

Belongs to the RNase HII family. Mn(2+) is required as a cofactor. It depends on Mg(2+) as a cofactor.

Its subcellular location is the cytoplasm. The catalysed reaction is Endonucleolytic cleavage to 5'-phosphomonoester.. Its function is as follows. Endonuclease that specifically degrades the RNA of RNA-DNA hybrids. The protein is Ribonuclease HII of Prochlorococcus marinus (strain NATL1A).